A 275-amino-acid chain; its full sequence is Large ribosomal subunit protein uL2 (275 aa).

The disordered stretch occupies residues 222-275; it reads GVAMNPVDHPHGGGEGRNKGRHPTSPWGQKSKGLKTRHNKRTDNMIIRRRAKKK. Over residues 229–239 the composition is skewed to basic and acidic residues; sequence DHPHGGGEGRN.

This sequence belongs to the universal ribosomal protein uL2 family. As to quaternary structure, part of the 50S ribosomal subunit. Forms a bridge to the 30S subunit in the 70S ribosome.

In terms of biological role, one of the primary rRNA binding proteins. Required for association of the 30S and 50S subunits to form the 70S ribosome, for tRNA binding and peptide bond formation. It has been suggested to have peptidyltransferase activity; this is somewhat controversial. Makes several contacts with the 16S rRNA in the 70S ribosome. The polypeptide is Large ribosomal subunit protein uL2 (Psychrobacter cryohalolentis (strain ATCC BAA-1226 / DSM 17306 / VKM B-2378 / K5)).